Consider the following 373-residue polypeptide: GTP cyclohydrolase 1 type 2 homolog (373 aa).

Positions 67, 68, 106, 333, and 336 each coordinate a divalent metal cation.

This sequence belongs to the GTP cyclohydrolase I type 2/NIF3 family. Homohexamer.

The protein is GTP cyclohydrolase 1 type 2 homolog of Listeria monocytogenes serovar 1/2a (strain ATCC BAA-679 / EGD-e).